A 157-amino-acid polypeptide reads, in one-letter code: Putative pre-16S rRNA nuclease (157 aa).

It belongs to the YqgF nuclease family.

Its subcellular location is the cytoplasm. Its function is as follows. Could be a nuclease involved in processing of the 5'-end of pre-16S rRNA. The chain is Putative pre-16S rRNA nuclease from Nitrosomonas eutropha (strain DSM 101675 / C91 / Nm57).